We begin with the raw amino-acid sequence, 217 residues long: Biotin transport regulator (217 aa).

The tract at residues 14–49 (GDGLGNLAGRSADPTGAADKGESGVPVPPTGFVDPT) is disordered.

Functionally, may be part of a system that R.meliloti uses to respond to plant (alfalfa) biotin signals. The sequence is that of Biotin transport regulator (bioS) from Rhizobium meliloti (strain 1021) (Ensifer meliloti).